The chain runs to 511 residues: Glutamyl-tRNA(Gln) amidotransferase subunit A, mitochondrial (511 aa).

Catalysis depends on charge relay system residues Lys-72 and Ser-149. The active-site Acyl-ester intermediate is Ser-173.

Belongs to the amidase family. GatA subfamily. As to quaternary structure, subunit of the heterotrimeric GatCAB amidotransferase (AdT) complex, composed of A, B and C subunits.

The protein resides in the mitochondrion. The enzyme catalyses L-glutamyl-tRNA(Gln) + L-glutamine + ATP + H2O = L-glutaminyl-tRNA(Gln) + L-glutamate + ADP + phosphate + H(+). In terms of biological role, allows the formation of correctly charged Gln-tRNA(Gln) through the transamidation of misacylated Glu-tRNA(Gln) in the mitochondria. The reaction takes place in the presence of glutamine and ATP through an activated gamma-phospho-Glu-tRNA(Gln). This chain is Glutamyl-tRNA(Gln) amidotransferase subunit A, mitochondrial, found in Fusarium vanettenii (strain ATCC MYA-4622 / CBS 123669 / FGSC 9596 / NRRL 45880 / 77-13-4) (Fusarium solani subsp. pisi).